The following is an 86-amino-acid chain: Small ribosomal subunit protein uS15 (86 aa).

Residues 1–22 form a disordered region; it reads MSVDTQKVIEDNKRSAQDTGSP. The span at 7 to 16 shows a compositional bias: basic and acidic residues; the sequence is KVIEDNKRSA.

The protein belongs to the universal ribosomal protein uS15 family. As to quaternary structure, part of the 30S ribosomal subunit. Forms a bridge to the 50S subunit in the 70S ribosome, contacting the 23S rRNA.

Functionally, one of the primary rRNA binding proteins, it binds directly to 16S rRNA where it helps nucleate assembly of the platform of the 30S subunit by binding and bridging several RNA helices of the 16S rRNA. Its function is as follows. Forms an intersubunit bridge (bridge B4) with the 23S rRNA of the 50S subunit in the ribosome. The polypeptide is Small ribosomal subunit protein uS15 (Xanthomonas campestris pv. campestris (strain 8004)).